The chain runs to 397 residues: uncharacterized protein (397 aa).

This sequence belongs to the ROK (NagC/XylR) family.

This is an uncharacterized protein from Escherichia coli (strain K12).